Reading from the N-terminus, the 295-residue chain is (R)-3-hydroxydecanoyl-ACP:CoA transacylase (295 aa).

The AB hydrolase-1 domain occupies 28 to 254 (NTIILINGSL…VIRDAGHFLD (227 aa)).

Its pathway is polyester biosynthesis; polyhydroxyalkanoate biosynthesis. In terms of biological role, catalyzes the transfer of the acyl moiety from in vitro synthesized 3-hydroxydecanoyl-CoA to acyl carrier protein. The protein is (R)-3-hydroxydecanoyl-ACP:CoA transacylase (phaG) of Pseudomonas putida (strain ATCC 47054 / DSM 6125 / CFBP 8728 / NCIMB 11950 / KT2440).